Here is a 97-residue protein sequence, read N- to C-terminus: Cornifin (97 aa).

Positions 1–42 (MSSQQQKQPCTPPPQPQQQQVKQPCQPPPQEPCVPKTKEPCH) are disordered. At serine 2 the chain carries N-acetylserine. Repeat copies occupy residues 3–14 (SQQQKQPCTPPP), 18–29 (QQQVKQPCQPPP), 31–38 (EPCVPKTK), 39–46 (EPCHPKVP), 47–54 (EPCQPKVP), 55–62 (EPCQPKVP), 63–70 (EPCHPKVP), 71–78 (EPCQPKVP), and 79–85 (EPCPSPV). The segment at 3-29 (SQQQKQPCTPPPQPQQQQVKQPCQPPP) is 2 X 12 AA approximate repeats. The tract at residues 31–85 (EPCVPKTKEPCHPKVPEPCQPKVPEPCQPKVPEPCHPKVPEPCQPKVPEPCPSPV) is 7 X 8 AA approximate tandem repeats.

Belongs to the cornifin (SPRR) family. As to expression, not detected in normal lung tissue but seen in tumor tissues. Cells around the keratin pearls contain high levels.

The protein resides in the cytoplasm. Its function is as follows. Cross-linked envelope protein of keratinocytes. It is a keratinocyte protein that first appears in the cell cytosol, but ultimately becomes cross-linked to membrane proteins by transglutaminase. All that results in the formation of an insoluble envelope beneath the plasma membrane. This Sus scrofa (Pig) protein is Cornifin (SPRP).